The chain runs to 874 residues: Probable leucine--tRNA ligase, cytoplasmic (874 aa).

The 'HIGH' region motif lies at P36–H46. Residues K544–S548 carry the 'KMSKS' region motif. K547 is an ATP binding site.

Belongs to the class-I aminoacyl-tRNA synthetase family.

Its subcellular location is the cytoplasm. The catalysed reaction is tRNA(Leu) + L-leucine + ATP = L-leucyl-tRNA(Leu) + AMP + diphosphate. This is Probable leucine--tRNA ligase, cytoplasmic from Encephalitozoon cuniculi (strain GB-M1) (Microsporidian parasite).